We begin with the raw amino-acid sequence, 388 residues long: Quinolone resistance protein NorA (388 aa).

Helical transmembrane passes span 5–25 (IFVL…VIPV), 42–62 (LLVA…GTLA), 69–89 (LIIC…AVGH), 99–119 (VIGG…IADI), 129–149 (FGYM…IGGF), 157–177 (MPFY…IVLI), 201–221 (WKVF…LSAF), 239–259 (DISI…IYFF), 269–289 (LTFI…LVFA), 293–313 (WSIM…RPAI), 331–351 (LNST…GALF), and 355–375 (IEAP…IVLI).

It belongs to the major facilitator superfamily. TCR/Tet family.

It localises to the cell membrane. In terms of biological role, involved in quinolone resistance. May constitute a membrane-associated active efflux pump of hydrophilic quinolones. The sequence is that of Quinolone resistance protein NorA (norA) from Staphylococcus aureus (strain COL).